The primary structure comprises 257 residues: Snake venom serine protease CL5 (257 aa).

Positions methionine 1–alanine 18 are cleaved as a signal peptide. Residues glutamine 19–leucine 24 constitute a propeptide that is removed on maturation. Residues valine 25–alanine 248 enclose the Peptidase S1 domain. Disulfide bonds link cysteine 31-cysteine 162, cysteine 49-cysteine 65, cysteine 141-cysteine 209, cysteine 173-cysteine 188, and cysteine 199-cysteine 224. The active-site Charge relay system is the histidine 64. Asparagine 78 and asparagine 102 each carry an N-linked (GlcNAc...) asparagine glycan. Aspartate 109 serves as the catalytic Charge relay system. 2 N-linked (GlcNAc...) asparagine glycosylation sites follow: asparagine 153 and asparagine 169. The active-site Charge relay system is serine 203. Asparagine 250 carries N-linked (GlcNAc...) asparagine glycosylation.

Belongs to the peptidase S1 family. Snake venom subfamily. In terms of assembly, monomer. As to expression, expressed by the venom gland.

The protein localises to the secreted. In terms of biological role, snake venom serine protease that may act in the hemostasis system of the prey. The polypeptide is Snake venom serine protease CL5 (Trimeresurus stejnegeri (Chinese green tree viper)).